Consider the following 206-residue polypeptide: Large ribosomal subunit protein uL4 (206 aa).

It belongs to the universal ribosomal protein uL4 family. Part of the 50S ribosomal subunit.

Functionally, one of the primary rRNA binding proteins, this protein initially binds near the 5'-end of the 23S rRNA. It is important during the early stages of 50S assembly. It makes multiple contacts with different domains of the 23S rRNA in the assembled 50S subunit and ribosome. Forms part of the polypeptide exit tunnel. The protein is Large ribosomal subunit protein uL4 of Rhodopseudomonas palustris (strain BisB18).